Reading from the N-terminus, the 459-residue chain is Cysteine--tRNA ligase (459 aa).

Cys29 contributes to the Zn(2+) binding site. Positions 31 to 41 (VTTYDYCHIGH) match the 'HIGH' region motif. Residues Cys210, His235, and Glu239 each contribute to the Zn(2+) site. A 'KMSKS' region motif is present at residues 267–271 (KMSKS). An ATP-binding site is contributed by Lys270.

It belongs to the class-I aminoacyl-tRNA synthetase family. As to quaternary structure, monomer. The cofactor is Zn(2+).

It is found in the cytoplasm. The catalysed reaction is tRNA(Cys) + L-cysteine + ATP = L-cysteinyl-tRNA(Cys) + AMP + diphosphate. The polypeptide is Cysteine--tRNA ligase (Idiomarina loihiensis (strain ATCC BAA-735 / DSM 15497 / L2-TR)).